Consider the following 1888-residue polypeptide: E3 ubiquitin-protein ligase UBR3 (1888 aa).

The segment at 1–24 (MAAAAAAAVGGQQPSQPELPAPGL) is disordered. The UBR-type zinc-finger motif lies at 118–189 (ALCGLVWTAN…ESGFCKRHQI (72 aa)). Residues 339 to 362 (GQVDSSDEDDQDGSQGLGKRKRVK) are disordered. Phosphoserine is present on residues S343 and S344. 2 helical membrane passes run 761-781 (MLEG…HLGM) and 919-939 (LLHC…ILMD). Disordered regions lie at residues 1008 to 1028 (APEV…GSLQ) and 1164 to 1186 (VPPK…RQKA). Residues 1016–1028 (PASTSSDNLGSLQ) are compositionally biased toward polar residues. A coiled-coil region spans residues 1168-1199 (KVTAAEKKTLDKEERRQKARERQQKLLAEFAS). The segment covering 1170-1186 (TAAEKKTLDKEERRQKA) has biased composition (basic and acidic residues). S1199 bears the Phosphoserine mark. Residues 1306 to 1364 (DSSCLLAVSIGWEGGVYVQTCGHTLHIDCHKSYMESLRNDQVLQGFSVDKGEFTCPLCR) form an RING-type; degenerate zinc finger. The chain crosses the membrane as a helical span at residues 1806 to 1826 (QNCGAGTGIFLLINASVIIII).

It belongs to the E3 ubiquitin-protein ligase UBR1-like family. In terms of assembly, interacts with UBE2A and UBE2B.

Its subcellular location is the membrane. The catalysed reaction is S-ubiquitinyl-[E2 ubiquitin-conjugating enzyme]-L-cysteine + [acceptor protein]-L-lysine = [E2 ubiquitin-conjugating enzyme]-L-cysteine + N(6)-ubiquitinyl-[acceptor protein]-L-lysine.. It functions in the pathway protein modification; protein ubiquitination. Its function is as follows. E3 ubiquitin-protein ligase which is a component of the N-end rule pathway. Does not bind to proteins bearing specific N-terminal residues that are destabilizing according to the N-end rule, leading to their ubiquitination and subsequent degradation. May play a role in Shh signaling by mediating the ubiquitination of Kif7. May be important for MYH9 function in certain tissues, possibly by regulating the ubiquitination of MYH9 and consequently affecting its interaction with MYO7A. This is E3 ubiquitin-protein ligase UBR3 (UBR3) from Homo sapiens (Human).